The chain runs to 213 residues: 2-dehydro-3-deoxy-phosphogluconate aldolase (213 aa).

E45 (proton acceptor) is an active-site residue. R49, T73, and K133 together coordinate pyruvate. K133 acts as the Schiff-base intermediate with substrate in catalysis.

Belongs to the KHG/KDPG aldolase family. As to quaternary structure, homotrimer.

The protein resides in the cytoplasm. It catalyses the reaction 2-dehydro-3-deoxy-6-phospho-D-gluconate = D-glyceraldehyde 3-phosphate + pyruvate. The protein operates within carbohydrate acid metabolism; 2-dehydro-3-deoxy-D-gluconate degradation; D-glyceraldehyde 3-phosphate and pyruvate from 2-dehydro-3-deoxy-D-gluconate: step 2/2. Involved in the degradation of glucose via the Entner-Doudoroff pathway. Catalyzes the reversible, stereospecific retro-aldol cleavage of 2-keto-3-deoxy-6-phosphogluconate (KDPG) to pyruvate and D-glyceraldehyde-3-phosphate. In Dickeya dadantii (strain 3937) (Erwinia chrysanthemi (strain 3937)), this protein is 2-dehydro-3-deoxy-phosphogluconate aldolase (eda).